The following is a 435-amino-acid chain: Eukaryotic peptide chain release factor subunit 1-2 (435 aa).

A2 is subject to N-acetylalanine.

It belongs to the eukaryotic release factor 1 family. As to quaternary structure, heterodimer of two subunits, one of which binds GTP. Interacts with OR.

The protein resides in the cytoplasm. In terms of biological role, directs the termination of nascent peptide synthesis (translation) in response to the termination codons UAA, UAG and UGA. Modulates plant growth and development. The polypeptide is Eukaryotic peptide chain release factor subunit 1-2 (Brassica oleracea var. botrytis (Cauliflower)).